A 390-amino-acid chain; its full sequence is E3 ubiquitin-protein ligase At4g11680 (390 aa).

Residues methionine 1–serine 19 show a composition bias toward low complexity. The disordered stretch occupies residues methionine 1–leucine 39. Transmembrane regions (helical) follow at residues valine 109–isoleucine 129, valine 142–tyrosine 162, methionine 212–leucine 232, isoleucine 244–isoleucine 264, and glycine 265–glutamine 285. Residues cysteine 338–lysine 379 form an RING-type; atypical zinc finger.

It is found in the membrane. It catalyses the reaction S-ubiquitinyl-[E2 ubiquitin-conjugating enzyme]-L-cysteine + [acceptor protein]-L-lysine = [E2 ubiquitin-conjugating enzyme]-L-cysteine + N(6)-ubiquitinyl-[acceptor protein]-L-lysine.. It functions in the pathway protein modification; protein ubiquitination. Its function is as follows. Mediates E2-dependent protein ubiquitination in vitro. This chain is E3 ubiquitin-protein ligase At4g11680, found in Arabidopsis thaliana (Mouse-ear cress).